Here is a 238-residue protein sequence, read N- to C-terminus: MKSFLIAIVIAVLLPVSAADFCAQWRLSKAGKYIIYNNLWNQNTATSGSQCTGVDKVSGSTVAWHTSYSWAGAPTQVKSYSNAALVFTKKQIKNIKTIPTTMKYSYSYSGTLIADVAYDLFTSSTASGSNEYEIMIWLAAYGGAGPISSTGKAIATVTINSNSFKLYKGPNGSTTVYSFVATKTITNFSADLLDFFTYLVKTQAFPSSQYLTTLEAGTEPFTGSNAKMTVSSYSAAVN.

An N-terminal signal peptide occupies residues 1–19 (MKSFLIAIVIAVLLPVSAA). Glutamate 133 is a catalytic residue. N-linked (GlcNAc...) asparagine glycosylation is found at asparagine 171 and asparagine 187. Glutamate 219 is a catalytic residue.

This sequence belongs to the glycosyl hydrolase 12 (cellulase H) family. Interacts with host apoplastic glucanase inhibitor GIP2.

It localises to the secreted. Functionally, non-functional secreted XEG1-like protein that binds to host Nicotiana benthamiana apoplastic glucanase inhibitor protein GIP2 more tightly than does XEG1, thus it outcompetes XEG1 for GIP2 binding and frees functional XEG1 to support P.parasitica infection. With XEG1, is required to elevate apoplastic sugar during P.parasitica infection. The chain is Inactive glycoside hydrolase XLP1 from Phytophthora nicotianae (strain INRA-310) (Phytophthora parasitica).